The chain runs to 686 residues: Acyl-CoA synthetase short-chain family member 3, mitochondrial (686 aa).

Residues 1–29 (MKPSWLQCRKVTSAGGLGGPLPGSSPARG) constitute a mitochondrion transit peptide. CoA is bound at residue 227–230 (EPGR). ATP is bound by residues 425–427 (GER) and 446–451 (DHWWQT). Position 518 is an N6-succinyllysine (Lys-518). At Lys-524 the chain carries N6-acetyllysine. Residues Asp-539, Arg-554, and Arg-565 each contribute to the ATP site. Residue Arg-624 coordinates CoA.

It belongs to the ATP-dependent AMP-binding enzyme family.

Its subcellular location is the mitochondrion matrix. The enzyme catalyses acetate + ATP + CoA = acetyl-CoA + AMP + diphosphate. It catalyses the reaction propanoate + ATP + CoA = propanoyl-CoA + AMP + diphosphate. The catalysed reaction is butanoate + ATP + CoA = butanoyl-CoA + AMP + diphosphate. Catalyzes the synthesis of acetyl-CoA from short-chain fatty acids. Propionate is the preferred substrate. Can utilize acetate and butyrate with a much lower affinity. This chain is Acyl-CoA synthetase short-chain family member 3, mitochondrial (ACSS3), found in Homo sapiens (Human).